The following is a 497-amino-acid chain: Probable malate:quinone oxidoreductase (497 aa).

This sequence belongs to the MQO family. FAD is required as a cofactor.

It catalyses the reaction (S)-malate + a quinone = a quinol + oxaloacetate. The protein operates within carbohydrate metabolism; tricarboxylic acid cycle; oxaloacetate from (S)-malate (quinone route): step 1/1. The polypeptide is Probable malate:quinone oxidoreductase (Hahella chejuensis (strain KCTC 2396)).